The primary structure comprises 368 residues: Histidinol-phosphate aminotransferase 1 (368 aa).

Position 224 is an N6-(pyridoxal phosphate)lysine (Lys224).

Belongs to the class-II pyridoxal-phosphate-dependent aminotransferase family. Histidinol-phosphate aminotransferase subfamily. As to quaternary structure, homodimer. Pyridoxal 5'-phosphate is required as a cofactor.

The enzyme catalyses L-histidinol phosphate + 2-oxoglutarate = 3-(imidazol-4-yl)-2-oxopropyl phosphate + L-glutamate. It participates in amino-acid biosynthesis; L-histidine biosynthesis; L-histidine from 5-phospho-alpha-D-ribose 1-diphosphate: step 7/9. The sequence is that of Histidinol-phosphate aminotransferase 1 (hisC1) from Rhizobium meliloti (strain 1021) (Ensifer meliloti).